The primary structure comprises 178 residues: MNKQVVAKRYASALFEIAKEQQLLDQLEQELRVVKQVFAQNETLLSVLNHPKIALAKKKALVQEAFANISTVLQHTLMLLLDRHRIDIVNDLADAFIALANEARGVAEAIVYSARPLTEDETNALADVFAKKVGVDTLRITNIIDKDVIGGVKVRIGNRIFDGSVSGKLARLQRQLTR.

It belongs to the ATPase delta chain family. F-type ATPases have 2 components, F(1) - the catalytic core - and F(0) - the membrane proton channel. F(1) has five subunits: alpha(3), beta(3), gamma(1), delta(1), epsilon(1). F(0) has three main subunits: a(1), b(2) and c(10-14). The alpha and beta chains form an alternating ring which encloses part of the gamma chain. F(1) is attached to F(0) by a central stalk formed by the gamma and epsilon chains, while a peripheral stalk is formed by the delta and b chains.

The protein resides in the cell membrane. Functionally, f(1)F(0) ATP synthase produces ATP from ADP in the presence of a proton or sodium gradient. F-type ATPases consist of two structural domains, F(1) containing the extramembraneous catalytic core and F(0) containing the membrane proton channel, linked together by a central stalk and a peripheral stalk. During catalysis, ATP synthesis in the catalytic domain of F(1) is coupled via a rotary mechanism of the central stalk subunits to proton translocation. In terms of biological role, this protein is part of the stalk that links CF(0) to CF(1). It either transmits conformational changes from CF(0) to CF(1) or is implicated in proton conduction. The sequence is that of ATP synthase subunit delta from Anoxybacillus flavithermus (strain DSM 21510 / WK1).